The chain runs to 426 residues: Dihydropyrimidine dehydrogenase (NADP(+)), chloroplastic (426 aa).

A chloroplast-targeting transit peptide spans 1–44; sequence MASMSFALNRFSGLSSKTTLSADFDPSSRRSFLPPTRVGLKISS. A45 is subject to N-acetylalanine. Substrate contacts are provided by residues N129 and 188–190; that span reads NFS. C191 acts as the Nucleophile in catalysis. 256–257 lines the substrate pocket; that stretch reads NT. The interval 395 to 414 is disordered; sequence VEQRKAEKRGLKSDKDWTGD.

Belongs to the dihydropyrimidine dehydrogenase family. As to expression, expressed in roots, leaves, stems, siliques and flowers. Highly expressed ion dry seeds.

The protein localises to the plastid. It localises to the chloroplast. It catalyses the reaction 5,6-dihydrouracil + NADP(+) = uracil + NADPH + H(+). Its pathway is amino-acid biosynthesis; beta-alanine biosynthesis. In terms of biological role, involved in pyrimidine base degradation. Catalyzes the reduction of uracil to 5,6-dihydrouracil (DHU) by using NADH as a specific cosubstrate and the reduction of thymine to 5,6-dihydrothymine (DHT). Involved in the recycling of nitrogen from nucleobases to general nitrogen metabolism. The chain is Dihydropyrimidine dehydrogenase (NADP(+)), chloroplastic from Arabidopsis thaliana (Mouse-ear cress).